The following is a 385-amino-acid chain: Photoreceptor ankyrin repeat protein (385 aa).

5 ANK repeats span residues 17-46 (CNLKTLYWACVHNDLAELQARLDAGVSPEE), 53-83 (NGRTGLMVACYHGFGSIVALLSCCPFLDVNQ), 87-116 (DGNTALMLAAQAGHMSLVTLLLNYFAGLDL), 122-151 (RGLTALMKAAIQDRSECVVALLMAGADLSS), and 156-190 (RGKTALEWAVLTDSFDTAQKIRQLLRRPQAEQLSL). Residues 270–385 (LGTRGKSVPE…GGLGQAGGSK (116 aa)) are disordered. Pro residues predominate over residues 284–297 (APPPPPEPHPPQQV). The segment covering 304–326 (APNQSPQSMFSQWLQSRDSTRSQ) has biased composition (polar residues). Residues 361-373 (FQERKKKEEETEP) show a composition bias toward basic and acidic residues. The segment covering 374–385 (RGGGLGQAGGSK) has biased composition (gly residues).

In terms of tissue distribution, isoform 1: Expressed predominantly in the retina. Isoform 2: Expressed in the pineal gland.

It is found in the cytoplasm. Its subcellular location is the cytosol. The protein localises to the nucleus. In terms of biological role, acts as a transcriptional repressor for CRX-activated photoreceptor gene regulation. The sequence is that of Photoreceptor ankyrin repeat protein from Mus musculus (Mouse).